Here is a 117-residue protein sequence, read N- to C-terminus: Large ribosomal subunit protein uL18 (117 aa).

Belongs to the universal ribosomal protein uL18 family. As to quaternary structure, part of the 50S ribosomal subunit; part of the 5S rRNA/L5/L18/L25 subcomplex. Contacts the 5S and 23S rRNAs.

This is one of the proteins that bind and probably mediate the attachment of the 5S RNA into the large ribosomal subunit, where it forms part of the central protuberance. This Actinobacillus succinogenes (strain ATCC 55618 / DSM 22257 / CCUG 43843 / 130Z) protein is Large ribosomal subunit protein uL18.